Consider the following 163-residue polypeptide: Neurotrophin-3 (163 aa).

Residues 1-3 (IQS) form the signal peptide. A propeptide spanning residues 4-119 (TSMDQGILTE…VLNRTSRRKR (116 aa)) is cleaved from the precursor. An N-linked (GlcNAc...) asparagine glycan is attached at asparagine 112.

Belongs to the NGF-beta family.

It localises to the secreted. In terms of biological role, seems to promote the survival of visceral and proprioceptive sensory neurons. This chain is Neurotrophin-3 (NTF3), found in Eryx conicus (Rough-scaled sand boa).